We begin with the raw amino-acid sequence, 358 residues long: NAC domain-containing protein 12 (358 aa).

Residues 16-177 (VPPGFRFHPT…GWVVCRVFRK (162 aa)) form the NAC domain. Residues 116-183 (IGLRKTLVFY…VFRKKNYQKI (68 aa)) mediate DNA binding.

Stems and roots, specifically in interfascicular fibers (sclerenchyma), cells differentiating into vascular vessels (cambium), and xylem.

The protein resides in the nucleus. In terms of biological role, transcriptional activator of genes involved in biosynthesis of secondary walls. Together with NST1, required for the secondary cell wall thickening and lignification of sclerenchymatous fibers and secondary xylem vessels (tracheary elements). Seems to repress the secondary cell wall thickening of xylary fibers. May also regulate the secondary cell wall lignification of other tissues. Binds to and activates the promoter of MYB46. This is NAC domain-containing protein 12 from Arabidopsis thaliana (Mouse-ear cress).